Consider the following 107-residue polypeptide: Prokineticin-2 (107 aa).

Positions 1 to 26 are cleaved as a signal peptide; it reads MEDPRCAPLLLLLLLPLLLTPPAGDA. Disulfide bonds link C33–C45, C39–C57, C44–C85, C67–C93, and C87–C103.

Belongs to the AVIT (prokineticin) family. As to expression, expressed at high levels in testis and at lower levels in brain, lung, ovary, spleen, thymus and uterus.

The protein resides in the secreted. Its function is as follows. May function as an output molecule from the suprachiasmatic nucleus (SCN) that transmits behavioral circadian rhythm. May also function locally within the SCN to synchronize output. Potently contracts gastrointestinal (GI) smooth muscle. The sequence is that of Prokineticin-2 (Prok2) from Rattus norvegicus (Rat).